Reading from the N-terminus, the 137-residue chain is MSRQHQKSSPPGGSTRSLRVGELIRHAVAEILAQGGVHDPVLESHLVTVPEVRMSPDLKLATIYVMPLGGRDEKLVIDALEHHKRFLRGEIAHRVNLKFAPELRFRIDERFAEAERIDKLLRSPAVQKDLEPNSDQD.

The protein belongs to the RbfA family. In terms of assembly, monomer. Binds 30S ribosomal subunits, but not 50S ribosomal subunits or 70S ribosomes.

Its subcellular location is the cytoplasm. One of several proteins that assist in the late maturation steps of the functional core of the 30S ribosomal subunit. Associates with free 30S ribosomal subunits (but not with 30S subunits that are part of 70S ribosomes or polysomes). Required for efficient processing of 16S rRNA. May interact with the 5'-terminal helix region of 16S rRNA. This is Ribosome-binding factor A from Rhodopseudomonas palustris (strain TIE-1).